The chain runs to 435 residues: Adenylosuccinate synthetase (435 aa).

Residues 11–17 (GDEGKGK) and 39–41 (GHT) each bind GTP. The active-site Proton acceptor is D12. Mg(2+) is bound by residues D12 and G39. IMP-binding positions include 12 to 15 (DEGK), 37 to 40 (NAGH), T134, R148, N230, T245, and R309. Catalysis depends on H40, which acts as the Proton donor. Residue 305–311 (VTTGRKR) participates in substrate binding. GTP is bound by residues R311, 337 to 339 (KLD), and 419 to 421 (GTG).

This sequence belongs to the adenylosuccinate synthetase family. In terms of assembly, homodimer. Requires Mg(2+) as cofactor.

It localises to the cytoplasm. The catalysed reaction is IMP + L-aspartate + GTP = N(6)-(1,2-dicarboxyethyl)-AMP + GDP + phosphate + 2 H(+). The protein operates within purine metabolism; AMP biosynthesis via de novo pathway; AMP from IMP: step 1/2. Its function is as follows. Plays an important role in the de novo pathway and in the salvage pathway of purine nucleotide biosynthesis. Catalyzes the first committed step in the biosynthesis of AMP from IMP. The sequence is that of Adenylosuccinate synthetase from Zygosaccharomyces rouxii (strain ATCC 2623 / CBS 732 / NBRC 1130 / NCYC 568 / NRRL Y-229).